Consider the following 360-residue polypeptide: Peptide chain release factor 1 (360 aa).

Q235 carries the post-translational modification N5-methylglutamine.

It belongs to the prokaryotic/mitochondrial release factor family. In terms of processing, methylated by PrmC. Methylation increases the termination efficiency of RF1.

It is found in the cytoplasm. Its function is as follows. Peptide chain release factor 1 directs the termination of translation in response to the peptide chain termination codons UAG and UAA. In Burkholderia ambifaria (strain MC40-6), this protein is Peptide chain release factor 1.